The primary structure comprises 212 residues: Thymidylate kinase (212 aa).

ATP is bound at residue 11–18; the sequence is GLEGAGKT.

Belongs to the thymidylate kinase family.

The catalysed reaction is dTMP + ATP = dTDP + ADP. In terms of biological role, phosphorylation of dTMP to form dTDP in both de novo and salvage pathways of dTTP synthesis. The sequence is that of Thymidylate kinase (tmk) from Buchnera aphidicola subsp. Acyrthosiphon pisum (strain APS) (Acyrthosiphon pisum symbiotic bacterium).